A 562-amino-acid chain; its full sequence is Arginine--tRNA ligase (562 aa).

A 'HIGH' region motif is present at residues 121 to 131 (PNIAKPMGMGH).

The protein belongs to the class-I aminoacyl-tRNA synthetase family. As to quaternary structure, monomer.

The protein localises to the cytoplasm. It catalyses the reaction tRNA(Arg) + L-arginine + ATP = L-arginyl-tRNA(Arg) + AMP + diphosphate. The polypeptide is Arginine--tRNA ligase (Limosilactobacillus reuteri (strain DSM 20016) (Lactobacillus reuteri)).